Consider the following 469-residue polypeptide: Cold shock protein CS66 (469 aa).

Repeat copies occupy residues 9–31 (GEKKGIMEKIKEKLPGGHGDHKE), 49–62 (TGGAYGQEGHTGTT), 72–94 (GEKKGVMENIKDKLPGGHADHQQ), 95–108 (TGGTYGQQGHTGTA), 115–128 (TGGTYGQQGHTGTA), 135–148 (TNGTYGEHGHTGTA), 149–162 (TGGSYGEQRHTGVT), 170–192 (GEKKSLMENIKEKLPGGHGDNQQ), 193–206 (TAGTYGQQGHFATG), 213–226 (TGGTYGEQGHAGVT), 234–256 (GEKKGLMENIKDKLPGGHGDHQQ), 257–270 (TGGTYGQQGHTGAA), 277–290 (GGGTYEQHGHTGMT), 298–320 (GGKKGVMENIKDKLPGGHSDNQQ), 321–334 (TGGAYEQQGHTGAA), 341–354 (SGGTYEQHGHTGMT), 362–384 (GEKKAVMENIKDKLPGGHGDHQQ), 385–398 (TGGAYGQQGHTGTA), 405–418 (GGGTYEQHGNTGMT), 428–441 (TGGTHGQHGHTGTT), and 452–469 (GEKKSLMDKIKDKLPGQH). The segment at 9-390 (GEKKGIMEKI…DHQQTGGAYG (382 aa)) is 7 X 23 AA approximate repeats. The interval 49 to 441 (TGGAYGQEGH…HGQHGHTGTT (393 aa)) is 14 X 14 AA approximate repeats. Residues 87 to 112 (GGHADHQQTGGTYGQQGHTGTATHGT) form a disordered region. Positions 93–112 (QQTGGTYGQQGHTGTATHGT) are enriched in low complexity. The segment covering 203-214 (FATGTHGTPATG) has biased composition (low complexity). The interval 203-469 (FATGTHGTPA…KIKDKLPGQH (267 aa)) is disordered. Residues 233 to 254 (TGEKKGLMENIKDKLPGGHGDH) show a composition bias toward basic and acidic residues. The span at 255–274 (QQTGGTYGQQGHTGAATHGT) shows a compositional bias: low complexity. Residues 288–301 (GMTGTGTHGTGGKK) are compositionally biased toward gly residues. A compositionally biased stretch (basic and acidic residues) spans 302–312 (GVMENIKDKLP). A compositionally biased stretch (basic and acidic residues) spans 361 to 382 (TGEKKAVMENIKDKLPGGHGDH). Low complexity-rich tracts occupy residues 383–402 (QQTGGAYGQQGHTGTATHGT) and 412–429 (HGNTGMTGTETHGTTATG). Gly residues predominate over residues 439–450 (GTTGTGTHGTDG). A compositionally biased stretch (basic and acidic residues) spans 451–469 (VGEKKSLMDKIKDKLPGQH).

The protein belongs to the plant dehydrin family.

In terms of biological role, may reduce intracellular freezing damage during winter by hydrogen-bonding to the lattice of the nascent ice crystals, thus modifying the structure and/or propagation of ice crystals. The chain is Cold shock protein CS66 (CS66) from Triticum aestivum (Wheat).